The chain runs to 657 residues: 9-cis-epoxycarotenoid dioxygenase NCED9, chloroplastic (657 aa).

Positions 357, 406, 471, and 642 each coordinate Fe cation.

Belongs to the carotenoid oxygenase family. The cofactor is Fe(2+). Expressed in developing siliques, embryo and endosperm.

It is found in the plastid. It localises to the chloroplast stroma. It carries out the reaction a 9-cis-epoxycarotenoid + O2 = a 12'-apo-carotenal + 2-cis,4-trans-xanthoxin. The enzyme catalyses 9-cis-violaxanthin + O2 = (3S,5R,6S)-5,6-epoxy-3-hydroxy-5,6-dihydro-12'-apo-beta-caroten-12'-al + 2-cis,4-trans-xanthoxin. The catalysed reaction is 9'-cis-neoxanthin + O2 = (3S,5R,6R)-3,5-dihydroxy-6,7-didehydro-5,6-dihydro-12'-apo-beta-caroten-12'-al + 2-cis,4-trans-xanthoxin. Functionally, has a 11,12(11',12') 9-cis epoxycarotenoid cleavage activity. Catalyzes the first step of abscisic-acid biosynthesis from carotenoids. Contributes probably to abscisic acid synthesis for the induction of seed dormancy. The protein is 9-cis-epoxycarotenoid dioxygenase NCED9, chloroplastic (NCED9) of Arabidopsis thaliana (Mouse-ear cress).